The following is a 1451-amino-acid chain: Fanconi anemia group D2 protein homolog (1451 aa).

Residues 1–291 (MVSKRSRLDF…VKFILHSVTD (291 aa)) form an interaction with FANCE region. Ser222 bears the Phosphoserine mark. Residues 248 to 359 (VFSSLRLDPN…IKSAIRYEKT (112 aa)) are interaction with BRCA2. Residue Lys561 forms a Glycyl lysine isopeptide (Lys-Gly) (interchain with G-Cter in ubiquitin) linkage. Ser716 is subject to Phosphoserine. The segment at 858–879 (AAKSRHKGKTGGKKQKADSSTA) is disordered. Positions 860-871 (KSRHKGKTGGKK) are enriched in basic residues. 3 positions are modified to phosphoserine: Ser1257, Ser1406, and Ser1414. Residues 1399 to 1451 (IISQHPSSPENTSEDSEDGMTSYVSRNRAIEDGEDEANDGQDRDSDESDDSSS) form a disordered region. The segment covering 1430–1451 (DGEDEANDGQDRDSDESDDSSS) has biased composition (acidic residues).

This sequence belongs to the Fanconi anemia protein FANCD2 family. As to quaternary structure, homodimer; cannot be ubiquitinated and does not bind DNA. Part of a FANCI-FANCD2 heterodimeric complex that binds and scans dsDNA for DNA damage. Interacts directly with FANCE and FANCI. Interacts with USP1 and MEN1. The ubiquitinated form specifically interacts with BRCA1 and BLM. Both the nonubiquitinated and the monoubiquitinated forms interact with BRCA2; this interaction is mediated by phosphorylated FANCG and the complex also includes XCCR3. The ubiquitinated form specifically interacts with MTMR15/FAN1 (via UBZ-type zinc finger), leading to recruit MTMR15/FAN1 to sites of DNA damage. Interacts with DCLRE1B/Apollo. Interacts with POLN. Interacts with UHRF1 and UHRF2; these interactions promote FANCD2 activation. Post-translationally, monoubiquitinated on Lys-561 during S phase and upon genotoxic stress by FANCL in complex with E2 ligases UBE2T or UBE2W. Deubiquitinated by USP1 as cells enter G2/M, or once DNA repair is completed. Monoubiquitination requires the joint intervention of the FANC core complex, including FANCA, FANCB, FANCC, FANCE, FANCF, FANCG, and FANCM, and proteins involved in cell cycle checkpoints and DNA repair, including RPA1, ATR, CHEK1 and BRCA1, and is mediated by FANCL/PHF9. Monoubiquitination prevents DNA release from the FANCI-FANCD2 complex. FANCD2 is only ubiquitinated in the FANCI-FANCD2 complex and the monoubiquitination of FANCD2 is promoted by phosphorylation of FANCI. Ubiquitination is required for binding to chromatin, interaction with BRCA1, BRCA2 and MTMR15/FAN1, DNA repair, and normal cell cycle progression. Phosphorylated on several sites including Ser-222 and Ser-1401 in response to genotoxic stress by ATM and/or ATR.

The protein resides in the nucleus. Functionally, required for maintenance of chromosomal stability. Promotes accurate and efficient pairing of homologs during meiosis. Involved in the repair of DNA double-strand breaks, both by homologous recombination and single-strand annealing. The FANCI-FANCD2 complex binds and scans double-stranded DNA (dsDNA) for DNA damage; this complex stalls at DNA junctions between double-stranded DNA and single-stranded DNA. May participate in S phase and G2 phase checkpoint activation upon DNA damage. Plays a role in preventing breakage and loss of missegregating chromatin at the end of cell division, particularly after replication stress. Promotes BRCA2/FANCD1 loading onto damaged chromatin. May also be involved in B-cell immunoglobulin isotype switching. The chain is Fanconi anemia group D2 protein homolog (Fancd2) from Rattus norvegicus (Rat).